A 229-amino-acid chain; its full sequence is Probable bifunctional TENA-E protein (229 aa).

C158 and C173 are disulfide-bonded.

It belongs to the thiaminase-2 family.

The catalysed reaction is 4-amino-5-aminomethyl-2-methylpyrimidine + H2O = 4-amino-5-hydroxymethyl-2-methylpyrimidine + NH4(+). It carries out the reaction N-formyl-4-amino-5-aminomethyl-2-methylpyrimidine + H2O = 4-amino-5-aminomethyl-2-methylpyrimidine + formate. Its pathway is cofactor biosynthesis; thiamine diphosphate biosynthesis. In terms of biological role, may be involved in thiamine salvage. This chain is Probable bifunctional TENA-E protein, found in Glycine max (Soybean).